A 478-amino-acid chain; its full sequence is Glutamate--tRNA ligase (478 aa).

The 'HIGH' region signature appears at 23–33; that stretch reads PSPTGFIHLGN. Residues 130–145 are compositionally biased toward basic and acidic residues; it reads KQKPRYDGTWRPEEGK. The interval 130-153 is disordered; sequence KQKPRYDGTWRPEEGKTLPPVPEG. Residues 255 to 259 carry the 'KMSKS' region motif; it reads KMSKR. Position 258 (lysine 258) interacts with ATP.

This sequence belongs to the class-I aminoacyl-tRNA synthetase family. Glutamate--tRNA ligase type 1 subfamily. As to quaternary structure, monomer.

The protein resides in the cytoplasm. The enzyme catalyses tRNA(Glu) + L-glutamate + ATP = L-glutamyl-tRNA(Glu) + AMP + diphosphate. Functionally, catalyzes the attachment of glutamate to tRNA(Glu) in a two-step reaction: glutamate is first activated by ATP to form Glu-AMP and then transferred to the acceptor end of tRNA(Glu). In Paracidovorax citrulli (strain AAC00-1) (Acidovorax citrulli), this protein is Glutamate--tRNA ligase.